Here is a 381-residue protein sequence, read N- to C-terminus: 3-hydroxyisobutyryl-CoA hydrolase, mitochondrial (381 aa).

The transit peptide at Met1–Val25 directs the protein to the mitochondrion. 4 residues coordinate substrate: Glu116, Gly141, Glu164, and Asp172.

The protein belongs to the enoyl-CoA hydratase/isomerase family.

It localises to the mitochondrion. The enzyme catalyses 3-hydroxy-2-methylpropanoyl-CoA + H2O = 3-hydroxy-2-methylpropanoate + CoA + H(+). It participates in amino-acid degradation; L-valine degradation. Hydrolyzes 3-hydroxyisobutyryl-CoA (HIBYL-CoA), a saline catabolite. The sequence is that of 3-hydroxyisobutyryl-CoA hydrolase, mitochondrial (hibch) from Dictyostelium discoideum (Social amoeba).